The chain runs to 621 residues: Type 2 DNA topoisomerase 6 subunit B (621 aa).

ATP-binding positions include N48, D80, S101 to R102, G111 to S118, and K435.

Belongs to the TOP6B family. Homodimer. Heterotetramer of two Top6A and two Top6B chains.

The enzyme catalyses ATP-dependent breakage, passage and rejoining of double-stranded DNA.. Relaxes both positive and negative superturns and exhibits a strong decatenase activity. This is Type 2 DNA topoisomerase 6 subunit B from Methanosarcina acetivorans (strain ATCC 35395 / DSM 2834 / JCM 12185 / C2A).